Reading from the N-terminus, the 323-residue chain is MRTATLYRYSVPMEAGVILRHQRLKSRDGLLVKLQQGELSGWGEIAPLPEFSQETLDQAQVAAECWLQHWVSGVESDDSVLPSVAFGLSCAQAELKQTLPLSADYRKAPLCTGDPDELFAVLQALPGEKVAKVKVGLYEAVRDGMIVNVLLEALPDLTLRLDANRSWSRAKADGFAKYVNPALRSRIAFLEEPCKTRAESREFAQDTGIAIAWDESVREADFQVEAEPGVAAIVIKPTLVGSLARCQQLVQQAHQAGLVAVISSSIESSLGLTQLARLAAWLTPATVPGLDTLDLMQAQVVRPWPDSPLPLITTEQLGVVWHR.

Residue K134 is the Proton donor of the active site. The Mg(2+) site is built by D162, E191, and D214. Catalysis depends on K236, which acts as the Proton acceptor.

The protein belongs to the mandelate racemase/muconate lactonizing enzyme family. MenC type 1 subfamily. The cofactor is a divalent metal cation.

The catalysed reaction is (1R,6R)-6-hydroxy-2-succinyl-cyclohexa-2,4-diene-1-carboxylate = 2-succinylbenzoate + H2O. It functions in the pathway quinol/quinone metabolism; 1,4-dihydroxy-2-naphthoate biosynthesis; 1,4-dihydroxy-2-naphthoate from chorismate: step 4/7. Its pathway is quinol/quinone metabolism; menaquinone biosynthesis. Functionally, converts 2-succinyl-6-hydroxy-2,4-cyclohexadiene-1-carboxylate (SHCHC) to 2-succinylbenzoate (OSB). The polypeptide is o-succinylbenzoate synthase (Yersinia pseudotuberculosis serotype IB (strain PB1/+)).